Consider the following 326-residue polypeptide: DNA-directed RNA polymerase subunit alpha (326 aa).

Residues 1 to 232 (MQGSARDFLK…EQLSSFVELE (232 aa)) form an alpha N-terminal domain (alpha-NTD) region. Positions 246–326 (FDPQLLAAVD…NWPPVDLMSE (81 aa)) are alpha C-terminal domain (alpha-CTD).

It belongs to the RNA polymerase alpha chain family. As to quaternary structure, homodimer. The RNAP catalytic core consists of 2 alpha, 1 beta, 1 beta' and 1 omega subunit. When a sigma factor is associated with the core the holoenzyme is formed, which can initiate transcription.

The catalysed reaction is RNA(n) + a ribonucleoside 5'-triphosphate = RNA(n+1) + diphosphate. DNA-dependent RNA polymerase catalyzes the transcription of DNA into RNA using the four ribonucleoside triphosphates as substrates. The sequence is that of DNA-directed RNA polymerase subunit alpha from Vesicomyosocius okutanii subsp. Calyptogena okutanii (strain HA).